Reading from the N-terminus, the 704-residue chain is Polyribonucleotide nucleotidyltransferase (704 aa).

Mg(2+) contacts are provided by D487 and D493. The KH domain occupies 554 to 613; the sequence is PRLLTIKIHPDKIREVIGKGGSTIQAITKETGTQIDIQDDGTIIIASVNAIAAQAAKSRI. The region spanning 623–691 is the S1 motif domain; sequence GRIYEGKVAK…KQGRIRLSIK (69 aa).

The protein belongs to the polyribonucleotide nucleotidyltransferase family. As to quaternary structure, component of the RNA degradosome, which is a multiprotein complex involved in RNA processing and mRNA degradation. Mg(2+) is required as a cofactor.

The protein localises to the cytoplasm. It catalyses the reaction RNA(n+1) + phosphate = RNA(n) + a ribonucleoside 5'-diphosphate. Its function is as follows. Involved in mRNA degradation. Catalyzes the phosphorolysis of single-stranded polyribonucleotides processively in the 3'- to 5'-direction. The protein is Polyribonucleotide nucleotidyltransferase of Xanthomonas axonopodis pv. citri (strain 306).